We begin with the raw amino-acid sequence, 189 residues long: Large ribosomal subunit protein uL13 (189 aa).

The protein belongs to the universal ribosomal protein uL13 family.

This is Large ribosomal subunit protein uL13 (rpl13a) from Salmo trutta (Brown trout).